A 362-amino-acid polypeptide reads, in one-letter code: Cobalt-precorrin-5B C(1)-methyltransferase (362 aa).

Belongs to the CbiD family.

It catalyses the reaction Co-precorrin-5B + S-adenosyl-L-methionine = Co-precorrin-6A + S-adenosyl-L-homocysteine. The protein operates within cofactor biosynthesis; adenosylcobalamin biosynthesis; cob(II)yrinate a,c-diamide from sirohydrochlorin (anaerobic route): step 6/10. Its function is as follows. Catalyzes the methylation of C-1 in cobalt-precorrin-5B to form cobalt-precorrin-6A. This is Cobalt-precorrin-5B C(1)-methyltransferase from Burkholderia multivorans (strain ATCC 17616 / 249).